The following is a 607-amino-acid chain: CRISPR-associated DNA-binding protein Cas12m (607 aa).

Residues 1-16 (MTRVTVQTAGVHYKWQ) are wedge domain (WED-N). Residues 17–189 (MPDQLTQQLR…QLRHHRWDGT (173 aa)) are recognition domain (REC). Positions 50–124 (WSSYPAVAAL…IASVRDEATE (75 aa)) are roof in REC. Over residues 74–83 (ASTVKEEKSR) the composition is skewed to basic and acidic residues. Residues 74-94 (ASTVKEEKSRQRTKRPSHPAV) are disordered. The wedge domain (WED-C) stretch occupies residues 190-315 (GTISVQLQRQ…KIPDQGEVDE (126 aa)). The tract at residues 316 to 559 (GPTIAVHLGW…TVSHTGLSRV (244 aa)) is ruvC-I. The ruvC insertion stretch occupies residues 391–452 (SIRDTLVAWL…EGADIAETLE (62 aa)). The interval 552–588 (SHTGLSRVHAACGHENPADDRYLMQPVLCDGCGRTYD) is target nucleic-acid binding (TNB). Residues histidine 560, cysteine 563, cysteine 580, and cysteine 583 each contribute to the Zn(2+) site. The segment at 589–607 (TDLSATILMLQRASAATSN) is ruvC-II. Aspartate 590 is a Mg(2+) binding site.

This sequence belongs to the CRISPR-associated DNA-binding protein Cas12m family. Binds crRNA and target dsDNA as a monomer. Mg(2+) is required as a cofactor. Requires Zn(2+) as cofactor.

Its function is as follows. CRISPR (clustered regularly interspaced short palindromic repeat), is an adaptive immune system that provides protection against mobile genetic elements (viruses, transposable elements and conjugative plasmids). CRISPR clusters contain sequences complementary to antecedent mobile elements and target invading nucleic acids. CRISPR clusters are transcribed and processed into CRISPR RNA (crRNA). Recognizes a short motif in the CRISPR repeat sequences (the 5' PAM or protospacer adjacent motif, 5'-TTN-3' in this organism) to help distinguish self versus nonself, as targets within the bacterial CRISPR locus do not have PAMs. Upon expression in E.coli as a CRISPR locus inhibits plasmid propagation when targeted to regions essential for plasmid propagation (replication origin and a selectable marker); inhibits expression of a non-selectable marker, probably at the transcriptional level. Protects E.coli against bacteriophage M13mp18, to a lesser extent against lambda and VpaE1 as well as phage T4 with hydroxymethyl or unmodified (but not glycosylated) cytosines. Preferentially binds to its associated crRNA. Cas12m-crRNA binds DNA in a PAM-dependent, crRNA-guided fashion. Binds a 20-bp crRNA-ss-target DNA heteroduplex, in a 52 nucleotide crRNA. No dsDNA, ssDNA or RNA nuclease activity is seen for the crRNA-Cas12m complex. Probably required for pre-crRNA processing to mature crRNA. This chain is CRISPR-associated DNA-binding protein Cas12m, found in Gordonia otitidis (strain DSM 44809 / CCUG 52243 / JCM 12355 / NBRC 100426 / IFM 10032).